The primary structure comprises 447 residues: Pup--protein ligase 2 (447 aa).

E4 lines the Mg(2+) pocket. Residue R48 participates in ATP binding. Residue Y50 participates in Mg(2+) binding. The Proton acceptor role is filled by D52. Mg(2+) is bound at residue E58. Positions 61 and 414 each coordinate ATP.

Belongs to the Pup ligase/Pup deamidase family. Pup-conjugating enzyme subfamily.

The enzyme catalyses ATP + [prokaryotic ubiquitin-like protein]-L-glutamate + [protein]-L-lysine = ADP + phosphate + N(6)-([prokaryotic ubiquitin-like protein]-gamma-L-glutamyl)-[protein]-L-lysine.. The protein operates within protein degradation; proteasomal Pup-dependent pathway. Its pathway is protein modification; protein pupylation. Functionally, catalyzes the covalent attachment of the prokaryotic ubiquitin-like protein modifier Pup to the proteasomal substrate proteins, thereby targeting them for proteasomal degradation. This tagging system is termed pupylation. The ligation reaction involves the side-chain carboxylate of the C-terminal glutamate of Pup and the side-chain amino group of a substrate lysine. The protein is Pup--protein ligase 2 of Rhodococcus erythropolis (Arthrobacter picolinophilus).